Reading from the N-terminus, the 60-residue chain is Large ribosomal subunit protein bL32 (60 aa).

This sequence belongs to the bacterial ribosomal protein bL32 family.

In Streptococcus pneumoniae serotype 4 (strain ATCC BAA-334 / TIGR4), this protein is Large ribosomal subunit protein bL32.